A 120-amino-acid chain; its full sequence is Aspartate 1-decarboxylase (120 aa).

Ser-25 serves as the catalytic Schiff-base intermediate with substrate; via pyruvic acid. Pyruvic acid (Ser) is present on Ser-25. Thr-57 serves as a coordination point for substrate. Tyr-58 serves as the catalytic Proton donor. 73 to 75 (GAA) is a binding site for substrate.

Belongs to the PanD family. In terms of assembly, heterooctamer of four alpha and four beta subunits. The cofactor is pyruvate. Post-translationally, is synthesized initially as an inactive proenzyme, which is activated by self-cleavage at a specific serine bond to produce a beta-subunit with a hydroxyl group at its C-terminus and an alpha-subunit with a pyruvoyl group at its N-terminus.

It is found in the cytoplasm. The enzyme catalyses L-aspartate + H(+) = beta-alanine + CO2. The protein operates within cofactor biosynthesis; (R)-pantothenate biosynthesis; beta-alanine from L-aspartate: step 1/1. Catalyzes the pyruvoyl-dependent decarboxylation of aspartate to produce beta-alanine. The sequence is that of Aspartate 1-decarboxylase from Deinococcus deserti (strain DSM 17065 / CIP 109153 / LMG 22923 / VCD115).